A 66-amino-acid polypeptide reads, in one-letter code: Small ribosomal subunit protein bS21 (66 aa).

It belongs to the bacterial ribosomal protein bS21 family.

This is Small ribosomal subunit protein bS21 from Rickettsia akari (strain Hartford).